A 214-amino-acid polypeptide reads, in one-letter code: uncharacterized protein (214 aa).

The next 2 helical transmembrane spans lie at 23-43 (ILVGACAAVWLVFTGVSVAAA) and 65-85 (VLYAVIVVSALVIVGAIPVLL). The interval 96–115 (ATRPTGASVRGGRSIGSGHP) is disordered. 2 helical membrane passes run 152 to 172 (VVLTSAIGIALIAVAAATYLM) and 181 to 201 (WISYGLAGVVTAGMPVIEWLY).

It is found in the cell membrane. This is an uncharacterized protein from Mycobacterium tuberculosis (strain CDC 1551 / Oshkosh).